We begin with the raw amino-acid sequence, 400 residues long: Elongation factor Tu 1 (400 aa).

Positions 10-209 (KPHLNIGTIG…AVDSYIPLPQ (200 aa)) constitute a tr-type G domain. A G1 region spans residues 19-26 (GHIDHGKT). 19–26 (GHIDHGKT) contributes to the GTP binding site. Thr-26 provides a ligand contact to Mg(2+). The tract at residues 60–64 (GITIN) is G2. Residues 81–84 (DCPG) are G3. GTP contacts are provided by residues 81–85 (DCPGH) and 136–139 (NKTD). The G4 stretch occupies residues 136-139 (NKTD). Residues 174 to 176 (SAL) form a G5 region.

Belongs to the TRAFAC class translation factor GTPase superfamily. Classic translation factor GTPase family. EF-Tu/EF-1A subfamily. In terms of assembly, monomer.

Its subcellular location is the cytoplasm. It carries out the reaction GTP + H2O = GDP + phosphate + H(+). GTP hydrolase that promotes the GTP-dependent binding of aminoacyl-tRNA to the A-site of ribosomes during protein biosynthesis. The sequence is that of Elongation factor Tu 1 from Syntrophomonas wolfei subsp. wolfei (strain DSM 2245B / Goettingen).